A 462-amino-acid chain; its full sequence is Hyaluronidase-1 (462 aa).

An N-terminal signal peptide occupies residues 1 to 52 (MLGLTQHAQKVWRMKPFSPEVSPGSSPATAGHLLRISTLFLTLLELAQVCRG). 2 disulfides stabilise this stretch: C71-C361 and C235-C249. N-linked (GlcNAc...) asparagine glycosylation is found at N98 and N127. E159 serves as the catalytic Proton donor. N-linked (GlcNAc...) asparagine glycosylation is found at N244, N265, and N378. 3 disulfide bridges follow: C386-C397, C391-C446, and C448-C457. Positions 446-457 (CRCYRGWRGKWC) constitute an EGF-like domain.

Belongs to the glycosyl hydrolase 56 family. In terms of tissue distribution, highly expressed in liver, kidney, lung and skin.

The protein resides in the secreted. It localises to the lysosome. It catalyses the reaction Random hydrolysis of (1-&gt;4)-linkages between N-acetyl-beta-D-glucosamine and D-glucuronate residues in hyaluronate.. In terms of biological role, may have a role in promoting tumor progression. May block the TGFB1-enhanced cell growth. The polypeptide is Hyaluronidase-1 (Hyal1) (Mus musculus (Mouse)).